Consider the following 96-residue polypeptide: Co-chaperonin GroES (96 aa).

Belongs to the GroES chaperonin family. Heptamer of 7 subunits arranged in a ring. Interacts with the chaperonin GroEL.

It localises to the cytoplasm. In terms of biological role, together with the chaperonin GroEL, plays an essential role in assisting protein folding. The GroEL-GroES system forms a nano-cage that allows encapsulation of the non-native substrate proteins and provides a physical environment optimized to promote and accelerate protein folding. GroES binds to the apical surface of the GroEL ring, thereby capping the opening of the GroEL channel. The protein is Co-chaperonin GroES of Vibrio atlanticus (strain LGP32) (Vibrio splendidus (strain Mel32)).